The primary structure comprises 289 residues: Oxaloacetate decarboxylase (289 aa).

Position 50 (serine 50) interacts with substrate. A Mg(2+)-binding site is contributed by aspartate 88. The substrate site is built by arginine 159 and histidine 235.

This sequence belongs to the isocitrate lyase/PEP mutase superfamily. Oxaloacetate decarboxylase family. As to quaternary structure, homotetramer; dimer of dimers. Mg(2+) serves as cofactor.

The enzyme catalyses oxaloacetate + H(+) = pyruvate + CO2. Its function is as follows. Catalyzes the decarboxylation of oxaloacetate into pyruvate. Seems to play a role in maintaining cellular concentrations of bicarbonate and pyruvate. In Pseudomonas savastanoi pv. phaseolicola (strain 1448A / Race 6) (Pseudomonas syringae pv. phaseolicola (strain 1448A / Race 6)), this protein is Oxaloacetate decarboxylase.